A 624-amino-acid polypeptide reads, in one-letter code: DNA damage response protein Mdb1 (624 aa).

3 disordered regions span residues 177–237 (ERIP…DDES), 249–386 (GETK…KNKH), and 591–624 (IGKRNVSKASRTGQGRKRSSRSSWNKPSAKEQRT). 2 stretches are compositionally biased toward basic and acidic residues: residues 200–217 (DEKLVLDGQHVEGDHSSD) and 225–235 (EDQKQLNKTDD). The span at 250-263 (ETKSPSSVSQSLSG) shows a compositional bias: polar residues. Phosphoserine occurs at positions 253 and 283. The segment covering 294–305 (NISDSSIKNNSI) has biased composition (low complexity). Composition is skewed to basic and acidic residues over residues 306–316 (HSDEVNPEVRP) and 325–352 (EESKRSAPEIALKEKESTSQDESNREAE). Polar residues predominate over residues 356–386 (ISTNYSFPSSSLEDQPDKNVQSSAVENKNKH). A BRCT domain is found at 376-468 (QSSAVENKNK…KVLDFRSYKY (93 aa)).

As to quaternary structure, homodimer. Interacts (via BRCT domain) with hta1 peptide containing the S/T-Q motif in vitro; this interaction requires phosphorylation of the hta1 peptide at the S/T-Q motif.

Its subcellular location is the nucleus. It localises to the chromosome. It is found in the cytoplasm. The protein resides in the cytoskeleton. The protein localises to the spindle. Its function is as follows. Involved in DNA damage response (DDR) mediated through its interaction with phosphorylated H2A proteins hta1 and hta2 which mark the discrete foci of DNA damage. This is DNA damage response protein Mdb1 from Schizosaccharomyces pombe (strain 972 / ATCC 24843) (Fission yeast).